The following is a 554-amino-acid chain: Acurin A biosynthesis cluster MFS-type transporter (554 aa).

5 consecutive transmembrane segments (helical) span residues 24 to 44 (WLIF…TSII), 60 to 80 (LYIW…AIVG), 96 to 116 (LLIF…GMLL), 123 to 143 (GLGG…MVSL), and 151 to 171 (GILG…GGGF). Asn-174 carries N-linked (GlcNAc...) asparagine glycosylation. 3 helical membrane passes run 179 to 199 (WIFY…VTLL), 219 to 239 (WGGI…LTWA), and 251 to 271 (IVPL…EALP). N-linked (GlcNAc...) asparagine glycosylation is present at Asn-283. A run of 6 helical transmembrane segments spans residues 289 to 309 (LFVM…FLPI), 324 to 344 (VMLF…GILM), 352 to 372 (SFQY…TLLD), 385 to 405 (ILFG…ILAS), 417 to 437 (TWIF…AAVF), and 496 to 516 (VWQV…LVKA).

It belongs to the major facilitator superfamily.

Its subcellular location is the membrane. Its function is as follows. MFS-type transporter that may have a role in the biosynthesis of acurin A, a highly reduced polyketide coupled to a serine via a peptide bond; either in extra- or intracellular transport. The protein is Acurin A biosynthesis cluster MFS-type transporter of Aspergillus aculeatus (strain ATCC 16872 / CBS 172.66 / WB 5094).